The chain runs to 450 residues: UDP-N-acetylmuramoylalanine--D-glutamate ligase (450 aa).

Residue 115-121 (GTNGKTT) participates in ATP binding.

This sequence belongs to the MurCDEF family.

The protein localises to the cytoplasm. It carries out the reaction UDP-N-acetyl-alpha-D-muramoyl-L-alanine + D-glutamate + ATP = UDP-N-acetyl-alpha-D-muramoyl-L-alanyl-D-glutamate + ADP + phosphate + H(+). Its pathway is cell wall biogenesis; peptidoglycan biosynthesis. In terms of biological role, cell wall formation. Catalyzes the addition of glutamate to the nucleotide precursor UDP-N-acetylmuramoyl-L-alanine (UMA). The chain is UDP-N-acetylmuramoylalanine--D-glutamate ligase from Lachnospira eligens (strain ATCC 27750 / DSM 3376 / VPI C15-48 / C15-B4) (Eubacterium eligens).